We begin with the raw amino-acid sequence, 185 residues long: Elongation factor P (185 aa).

This sequence belongs to the elongation factor P family.

The protein localises to the cytoplasm. Its pathway is protein biosynthesis; polypeptide chain elongation. Involved in peptide bond synthesis. Stimulates efficient translation and peptide-bond synthesis on native or reconstituted 70S ribosomes in vitro. Probably functions indirectly by altering the affinity of the ribosome for aminoacyl-tRNA, thus increasing their reactivity as acceptors for peptidyl transferase. This is Elongation factor P from Mesoplasma florum (strain ATCC 33453 / NBRC 100688 / NCTC 11704 / L1) (Acholeplasma florum).